The chain runs to 400 residues: Exodeoxyribonuclease 7 large subunit (400 aa).

Belongs to the XseA family. As to quaternary structure, heterooligomer composed of large and small subunits.

The protein localises to the cytoplasm. The catalysed reaction is Exonucleolytic cleavage in either 5'- to 3'- or 3'- to 5'-direction to yield nucleoside 5'-phosphates.. Bidirectionally degrades single-stranded DNA into large acid-insoluble oligonucleotides, which are then degraded further into small acid-soluble oligonucleotides. This is Exodeoxyribonuclease 7 large subunit from Clostridium novyi (strain NT).